Consider the following 1643-residue polypeptide: Outer membrane protein B (1643 aa).

Positions 1329 to 1352 are excised as a propeptide; the sequence is GTLRYLSNAETSDVAGSATGAVSS. One can recognise an Autotransporter domain in the interval 1355–1643; it reads EAEVSYGVWA…QGTLKVRVNF (289 aa).

This sequence belongs to the rickettsiae OmpA/OmpB family.

It is found in the periplasm. Its subcellular location is the secreted. The protein localises to the cell surface. It localises to the cell outer membrane. Its function is as follows. The 120 kDa surface-exposed protein is a major structural protein which may play a role as a rickettsial virulence factor and/or immunogen during infection. In terms of biological role, the 32 kDa beta peptide may serve as a membrane anchor. It has been shown to adhere to biotinylated Vero cell proteins. The sequence is that of Outer membrane protein B (ompB) from Rickettsia prowazekii (strain Madrid E).